We begin with the raw amino-acid sequence, 348 residues long: MMESRHAQRKNEHLSLAAKYYDQVHQHHYFDQVRLIHDSLPEMTTDDVDLHVQLADNLEIECPFYIEAMTGGSDQALKINRQLAQLAHKHHLAMATGSLSIISKDPQSFSSFEIIREENPDGIIFANLSANASLDQAINAISLLKANALELHINAAQELIMPEGDRDFNWLDNIQYLVSELEVPVIVKEVGFGMSKTTIAKLQTHDVHLINVSGRGGTNFAAIENRRNHDINFESLLDWGQTTPESLLEAHSIRRGKTEIIASGGITSPLDVIKAGVLGARAVGVAGYFLNILQNEGYEALDQTLGEWQVIVKRLLALLGCSSFTVLSRVEYVLGTDLLSYARQRHLR.

9–10 (RK) contacts substrate. Residues 68-70 (AMT), Ser98, and Asn127 each bind FMN. Residue Gln157 participates in substrate binding. Glu158 is a Mg(2+) binding site. Residues Lys188, Ser213, Thr218, and 286–287 (AG) each bind FMN.

This sequence belongs to the IPP isomerase type 2 family. In terms of assembly, homooctamer. Dimer of tetramers. Requires FMN as cofactor. The cofactor is NADPH. Mg(2+) serves as cofactor.

The protein localises to the cytoplasm. The enzyme catalyses isopentenyl diphosphate = dimethylallyl diphosphate. Functionally, involved in the biosynthesis of isoprenoids. Catalyzes the 1,3-allylic rearrangement of the homoallylic substrate isopentenyl (IPP) to its allylic isomer, dimethylallyl diphosphate (DMAPP). The chain is Isopentenyl-diphosphate delta-isomerase from Limosilactobacillus reuteri (strain DSM 20016) (Lactobacillus reuteri).